The following is a 154-amino-acid chain: Transcriptional repressor NrdR (154 aa).

A zinc finger lies at 3 to 34; that stretch reads CPFCGANDTKVIDSRLVAEGEQVRRRRECLAC. An ATP-cone domain is found at 49-139; the sequence is PRLIKTDGSR…VYRRFQDLNE (91 aa).

The protein belongs to the NrdR family. Zn(2+) is required as a cofactor.

Functionally, negatively regulates transcription of bacterial ribonucleotide reductase nrd genes and operons by binding to NrdR-boxes. This chain is Transcriptional repressor NrdR, found in Pseudomonas fluorescens (strain Pf0-1).